The primary structure comprises 183 residues: Holliday junction branch migration complex subunit RuvA (183 aa).

The tract at residues 1 to 63 (MIVGLIGVVE…EDAHLLYGFL (63 aa)) is domain I. Residues 64–139 (EEGEKILFER…FFIQDENRPA (76 aa)) are domain II. Residue Ala139 is a region of interest, flexible linker. The tract at residues 139–183 (ARNEVFLALESLGFKSAEINQVLKTLKPNLSIEAAIKEALQQLRS) is domain III.

It belongs to the RuvA family. As to quaternary structure, homotetramer. Forms an RuvA(8)-RuvB(12)-Holliday junction (HJ) complex. HJ DNA is sandwiched between 2 RuvA tetramers; dsDNA enters through RuvA and exits via RuvB. An RuvB hexamer assembles on each DNA strand where it exits the tetramer. Each RuvB hexamer is contacted by two RuvA subunits (via domain III) on 2 adjacent RuvB subunits; this complex drives branch migration. In the full resolvosome a probable DNA-RuvA(4)-RuvB(12)-RuvC(2) complex forms which resolves the HJ.

The protein resides in the cytoplasm. In terms of biological role, the RuvA-RuvB-RuvC complex processes Holliday junction (HJ) DNA during genetic recombination and DNA repair, while the RuvA-RuvB complex plays an important role in the rescue of blocked DNA replication forks via replication fork reversal (RFR). RuvA specifically binds to HJ cruciform DNA, conferring on it an open structure. The RuvB hexamer acts as an ATP-dependent pump, pulling dsDNA into and through the RuvAB complex. HJ branch migration allows RuvC to scan DNA until it finds its consensus sequence, where it cleaves and resolves the cruciform DNA. This is Holliday junction branch migration complex subunit RuvA from Helicobacter pylori (strain ATCC 700392 / 26695) (Campylobacter pylori).